A 665-amino-acid chain; its full sequence is Syntabulin (665 aa).

Residues 1–22 are compositionally biased toward basic and acidic residues; the sequence is MGPLRESKKEQRVQHQEKEISR. Residues 1–271 are disordered; it reads MGPLRESKKE…GVKPPNPEQY (271 aa). Residues 2 to 421 form a sufficient for interaction with KIF5B region; that stretch reads GPLRESKKEQ…DKLPDGLSLE (420 aa). Low complexity predominate over residues 35–52; it reads PQQQQQQQNKVSPASESP. Ser54 carries the post-translational modification Phosphoserine. Residues 61 to 77 show a composition bias toward low complexity; sequence FNPSSSGRSARTISSNS. Positions 85-101 are enriched in polar residues; it reads CPSSQSVSPVKTPSDTG. Position 111 is a phosphoserine (Ser111). Residues 141 to 162 are compositionally biased toward low complexity; that stretch reads GGIIKPGSEADFSSSSSTGSIS. Residues 168-180 are compositionally biased toward polar residues; that stretch reads MSTTGNKRASFSR. A compositionally biased stretch (low complexity) spans 225–245; the sequence is SYAPSSPSSSNSGSYKGSDCS. Residues 275–357 are a coiled coil; it reads LQQKEVTVRH…MRSSLADKDK (83 aa). Positions 314-421 are sufficient for interaction with STX1A; that stretch reads REDWIEEECH…DKLPDGLSLE (108 aa). Ser400 and Ser557 each carry phosphoserine. Residues 609–629 traverse the membrane as a helical segment; sequence FLVDLLAVAAPVVPTVLWAFS.

Interacts with STX1A and KIF5B.

The protein localises to the golgi apparatus membrane. Functionally, part of a kinesin motor-adapter complex that is critical for the anterograde axonal transport of active zone components and contributes to activity-dependent presynaptic assembly during neuronal development. This is Syntabulin (Sybu) from Mus musculus (Mouse).